A 164-amino-acid chain; its full sequence is Large ribosomal subunit protein uL15 (164 aa).

Residues 1-52 are disordered; sequence MSLSKLKAPKGANRERTRVGRGQGSGLGKTAGRGGKGQKARSGNMHFEGFEG. Positions 21-37 are enriched in gly residues; it reads RGQGSGLGKTAGRGGKG.

Belongs to the universal ribosomal protein uL15 family. As to quaternary structure, part of the 50S ribosomal subunit.

Functionally, binds to the 23S rRNA. The sequence is that of Large ribosomal subunit protein uL15 from Anaeromyxobacter sp. (strain Fw109-5).